The following is a 548-amino-acid chain: Chaperonin GroEL (548 aa).

ATP is bound by residues 29–32 (TMGP), Lys-50, 86–90 (DGTTT), Gly-414, 478–480 (NAA), and Asp-494.

The protein belongs to the chaperonin (HSP60) family. As to quaternary structure, forms a cylinder of 14 subunits composed of two heptameric rings stacked back-to-back. Interacts with the co-chaperonin GroES.

Its subcellular location is the cytoplasm. The catalysed reaction is ATP + H2O + a folded polypeptide = ADP + phosphate + an unfolded polypeptide.. Together with its co-chaperonin GroES, plays an essential role in assisting protein folding. The GroEL-GroES system forms a nano-cage that allows encapsulation of the non-native substrate proteins and provides a physical environment optimized to promote and accelerate protein folding. Its function is as follows. May play a protective role against the defense mechanisms generated by the infected macrophages. This chain is Chaperonin GroEL, found in Legionella pneumophila.